The primary structure comprises 181 residues: MSILSLVTAPDPILKKVSSPVDTVNDSIRQLIDDMLETMYHNHGVGLAAPQVAVSKRIIVLDLSKVDIEEDNITNSEYKYPLFMVNPIVKAISNQTVTAKEGCLSLPKQAIEVSRYHEIQVTYLDYYNKLKTLNAAGWLARAIQHEVDHLDGILLVDYLSNLKKEATLNTLSKIKDAAYDK.

Fe cation is bound by residues Cys-103 and His-145. Glu-146 is an active-site residue. His-149 provides a ligand contact to Fe cation.

It belongs to the polypeptide deformylase family. Requires Fe(2+) as cofactor.

The enzyme catalyses N-terminal N-formyl-L-methionyl-[peptide] + H2O = N-terminal L-methionyl-[peptide] + formate. In terms of biological role, removes the formyl group from the N-terminal Met of newly synthesized proteins. Requires at least a dipeptide for an efficient rate of reaction. N-terminal L-methionine is a prerequisite for activity but the enzyme has broad specificity at other positions. The polypeptide is Peptide deformylase (Orientia tsutsugamushi (strain Boryong) (Rickettsia tsutsugamushi)).